The sequence spans 413 residues: MDLETIRKVDPEAAKAIEQELDRQQFTLELIASENIASPAVMAAQGSVMTNKYAEGYPGHRYYGGCEFVDVAENLARDRAKELFQADYANVQPHSGSQANMGVYFALLEPGDTVLGMDLSHGGHLTHGSPVSFSGRIFNFIHYGVKEKTGTIDYDQLRSLAKEHKPKLIVAGASAYPRIIDFPELEKIARETGAYLMVDMAHIAGLVAAGEHPSPLPYADVVTTTTHKTLRGPRGGMILSNKGFGKKLSSQIFPGIQGGPLMHVIAAKAVAFKEALTPEFKAYQQQVVKNAACLAKRLMDNGVDLVSGGTDNHMMLLNLSNLDITGKEAEGLVEQAGITVNKNTIPFDKNGPAVTSGIRVGTPTITSRGMKEPEMELIADCLANVLKNPQDQALIESTRAKVKDLCQSFPIYA.

Residues leucine 119 and 123 to 125 (GHL) contribute to the (6S)-5,6,7,8-tetrahydrofolate site. Lysine 228 is modified (N6-(pyridoxal phosphate)lysine).

This sequence belongs to the SHMT family. As to quaternary structure, homodimer. It depends on pyridoxal 5'-phosphate as a cofactor.

The protein resides in the cytoplasm. It catalyses the reaction (6R)-5,10-methylene-5,6,7,8-tetrahydrofolate + glycine + H2O = (6S)-5,6,7,8-tetrahydrofolate + L-serine. The protein operates within one-carbon metabolism; tetrahydrofolate interconversion. Its pathway is amino-acid biosynthesis; glycine biosynthesis; glycine from L-serine: step 1/1. In terms of biological role, catalyzes the reversible interconversion of serine and glycine with tetrahydrofolate (THF) serving as the one-carbon carrier. This reaction serves as the major source of one-carbon groups required for the biosynthesis of purines, thymidylate, methionine, and other important biomolecules. Also exhibits THF-independent aldolase activity toward beta-hydroxyamino acids, producing glycine and aldehydes, via a retro-aldol mechanism. The sequence is that of Serine hydroxymethyltransferase from Desulfatibacillum aliphaticivorans.